A 432-amino-acid polypeptide reads, in one-letter code: MAKNIVVIGTQWGDEGKGKLVDLLTEHANAVVRFQGGHNAGHTLVIDGRKTVLHLIPSGILRDSVTCLIGNGVVLSPEALMQEIGVLESVGLSIRDRLIVSEACALILPVHIALDNAREAARGGKAIGTTGRGIGPAYEDKVARRGLRAGDLRDTAGLPERLRELLDYHNFMLTRYYGAQGVDFQETLDSLLDLGGKICPMLGDVAGILHRYQSAGENVLFEGAQGAMLDIDHGTYPYVTSSNTTAGGASCGTGVGLLNFDYVLGITKAYATRVGNGPFPTELLDATGEILTQKGAEFGATTGRRRRCGWFDAVLMRRSAKLNGLSGICLTKLDVLDGLPRIGICTGYRYDGQEIDTVPIGADNYARCEPIIEEMPGWQESTAGIRALDDLPANARAYIRRLEETTGVNVDIISTGPDRQDTIVIQNPFAAG.

GTP is bound by residues Gly-13–Lys-19 and Gly-41–Thr-43. Asp-14 serves as the catalytic Proton acceptor. Mg(2+) contacts are provided by Asp-14 and Gly-41. Residues Asp-14–Lys-17, Asn-39–His-42, Thr-130, Arg-144, Gln-225, Thr-240, and Arg-304 contribute to the IMP site. Residue His-42 is the Proton donor of the active site. Ala-300–Arg-306 lines the substrate pocket. GTP contacts are provided by residues Arg-306, Lys-332 to Asp-334, and Ser-414 to Gly-416.

It belongs to the adenylosuccinate synthetase family. As to quaternary structure, homodimer. Mg(2+) serves as cofactor.

The protein resides in the cytoplasm. It catalyses the reaction IMP + L-aspartate + GTP = N(6)-(1,2-dicarboxyethyl)-AMP + GDP + phosphate + 2 H(+). It participates in purine metabolism; AMP biosynthesis via de novo pathway; AMP from IMP: step 1/2. Its function is as follows. Plays an important role in the de novo pathway of purine nucleotide biosynthesis. Catalyzes the first committed step in the biosynthesis of AMP from IMP. The polypeptide is Adenylosuccinate synthetase (Methylococcus capsulatus (strain ATCC 33009 / NCIMB 11132 / Bath)).